The following is a 223-amino-acid chain: MTRDRELQALLRLTAWLSPAFPIGGFAYSGGLERAVADGLVTDAASLAAWIGTLVGNGSAWNDAVLLAESHRQQAQPARLAEVAALAEALAGSRERHQETMLLGEAFLAAARAWPDGVFERLPDKVAYPIAVGAVTGAHGIMPEKALAAFLHAYVSQAVSSGIRLGVAGQRDGLAVLAGLEDHIAEVARRAAASALDDLGSATVQADIASLRHETQATRLFRS.

Belongs to the UreF family. As to quaternary structure, ureD, UreF and UreG form a complex that acts as a GTP-hydrolysis-dependent molecular chaperone, activating the urease apoprotein by helping to assemble the nickel containing metallocenter of UreC. The UreE protein probably delivers the nickel.

It is found in the cytoplasm. Functionally, required for maturation of urease via the functional incorporation of the urease nickel metallocenter. The polypeptide is Urease accessory protein UreF (Rhizobium leguminosarum bv. viciae).